A 115-amino-acid polypeptide reads, in one-letter code: MHQQHSKSENKPQQQRKKFEGPKREAILDLAKYKDSKIRVKLMGGKLVIGVLKGYDQLMNLVLDDTVEYMSNPDDENNTELISKNARKLGLTVIRGTILVSLSSAEGSDVLYMQK.

The segment covering 1–10 (MHQQHSKSEN) has biased composition (basic and acidic residues). The segment at 1 to 23 (MHQQHSKSENKPQQQRKKFEGPK) is disordered. The region spanning 25-108 (EAILDLAKYK…LVSLSSAEGS (84 aa)) is the Sm domain.

This sequence belongs to the snRNP Sm proteins family. As to quaternary structure, component of the heptameric LSM1-LSM7 complex that forms a seven-membered ring structure with a donut shape. The LSm subunits are arranged in the order LSM1, LSM2, LSM3, LSM6, LSM5, LSM7 and LSM4. Except for LSM1, where a C-terminal helix crosses the ring structure to form additional interactions with LSM3 and LSM6, each subunit interacts only with its two neighboring subunits. The LSM1-LSM7 complex interacts with PAT1; within the complex PAT1 has direct interactions with LSM2 and LSM3. The LSM1-LSM7 complex interacts with XRN1. Component of the heptameric LSM2-LSM8 complex that forms a seven-membered ring structure with a donut shape; an RNA strand can pass through the hole in the center of the ring structure. The LSm subunits are arranged in the order LSM8, LSM2, LSM3, LSM6, LSM5, LSM7 and LSM4. Component of the spliceosome U4/U6-U5 tri-snRNP complex composed of the U4, U6 and U5 snRNAs and at least PRP3, PRP4, PRP6, PRP8, PRP18, PRP31, PRP38, SNU13, SNU23, SNU66, SNU114, SPP381, SMB1, SMD1, SMD2, SMD3, SMX2, SMX3, LSM2, LSM3, LSM4, LSM5, LSM6, LSM7, LSM8, BRR2 and DIB1. May be found in a complex comprising LSM2-LSM7 without LSM1 or LSM8; the complex associates with pre-P RNA and snoRNA SNR5.

It localises to the nucleus. Its subcellular location is the nucleolus. It is found in the cytoplasm. Component of LSm protein complexes, which are involved in RNA processing and may function in a chaperone-like manner. Component of the cytoplasmic LSM1-LSM7 complex which is involved in mRNA degradation by activating the decapping step. Together with PAT1, the LSM1-LSM7 complex binds to osmotic stress-activated mRNAs to attenuate the osmotic stress response, probably by limiting ribosome access to the mRNA and consequently translation. Component of the nuclear LSM2-LSM8 complex, which is involved in spliceosome assembly. The LSM2-LSM8 complex plays a role in the biogenesis of the spliceosomal U4/U6-U5 tri-snRNP complex by accelerating PRP24-mediated annealing of U4/U6 di-snRNA. The LSM2-LSM8 complex binds U6 snRNA terminating with a non-cyclic 3' phosphate group. LSM2-LSM8 is probably also involved in degradation of nuclear pre-mRNA by targeting them for decapping. LSM2-LSM8 could be involved in processing of pre-tRNAs, pre-rRNAs and U3 snoRNA, although involvement may be indirect. In a complex that probably contains LSM2-LSM7, but not LSM1 or LSM8, associates with the precursor of the RNA component of RNase P (pre-P RNA) and may be involved in maturing pre-P RNA; the complex also associates with snoRNA SNR5. This Saccharomyces cerevisiae (strain ATCC 204508 / S288c) (Baker's yeast) protein is LSM complex subunit LSM7 (LSM7).